We begin with the raw amino-acid sequence, 510 residues long: Protein ERGIC-53 (510 aa).

Positions Met-1–Gly-30 are cleaved as a signal peptide. Residues Asp-31 to Ser-477 are Lumenal-facing. The 224-residue stretch at Arg-44–Leu-267 folds into the L-type lectin-like domain. The a carbohydrate site is built by Ser-88 and Asp-121. Ca(2+) contacts are provided by Asp-152, Phe-154, and Asn-156. The a carbohydrate site is built by Asn-156 and His-178. Asp-181 provides a ligand contact to Ca(2+). A disulfide bond links Cys-190 and Cys-230. Gly-251–Leu-253 lines the a carbohydrate pocket. Ser-425 is modified (phosphoserine). A helical transmembrane segment spans residues Thr-478 to Tyr-498. Topologically, residues Arg-499–Phe-510 are cytoplasmic. The interval Arg-499–Phe-510 is mediates interaction with RAB3GAP1, RAB3GAP2 and UBXN6. Residues Phe-509 to Phe-510 carry the ER export motif motif.

As to quaternary structure, exists both as a covalent disulfide-linked homohexamer, and a complex of three disulfide-linked dimers non-covalently kept together. Interacts with MCFD2. May interact with TMEM115. Interacts with RAB3GAP1 and RAB3GAP2. Interacts with UBXN6. Interacts with SERPINA1/alpha1-antitrypsin. Interacts with BET1. The N-terminal may be partly blocked. In terms of tissue distribution, ubiquitous.

The protein localises to the endoplasmic reticulum-Golgi intermediate compartment membrane. It localises to the golgi apparatus membrane. Its subcellular location is the endoplasmic reticulum membrane. Its function is as follows. Mannose-specific lectin. May recognize sugar residues of glycoproteins, glycolipids, or glycosylphosphatidyl inositol anchors and may be involved in the sorting or recycling of proteins, lipids, or both. The LMAN1-MCFD2 complex forms a specific cargo receptor for the ER-to-Golgi transport of selected proteins. This is Protein ERGIC-53 (LMAN1) from Homo sapiens (Human).